The chain runs to 296 residues: Diaminopimelate epimerase (296 aa).

Substrate-binding residues include N17, Q49, and N69. C78 acts as the Proton donor in catalysis. Residues 79–80 (GN), N171, N205, and 223–224 (ER) each bind substrate. Residue C232 is the Proton acceptor of the active site. 233 to 234 (GT) contacts substrate.

Belongs to the diaminopimelate epimerase family. Homodimer.

It localises to the cytoplasm. It catalyses the reaction (2S,6S)-2,6-diaminopimelate = meso-2,6-diaminopimelate. It participates in amino-acid biosynthesis; L-lysine biosynthesis via DAP pathway; DL-2,6-diaminopimelate from LL-2,6-diaminopimelate: step 1/1. Catalyzes the stereoinversion of LL-2,6-diaminopimelate (L,L-DAP) to meso-diaminopimelate (meso-DAP), a precursor of L-lysine and an essential component of the bacterial peptidoglycan. The polypeptide is Diaminopimelate epimerase (Methylorubrum extorquens (strain PA1) (Methylobacterium extorquens)).